Consider the following 356-residue polypeptide: Holliday junction branch migration complex subunit RuvB (356 aa).

Residues 4-191 (TDKLATEQRI…FGIVARLEFY (188 aa)) are large ATPase domain (RuvB-L). Residues L30, R31, G72, K75, T76, T77, 138–140 (EDY), R181, Y191, and R228 each bind ATP. T76 provides a ligand contact to Mg(2+). Residues 192 to 262 (DAEQLSRIVR…VADAALAMLD (71 aa)) are small ATPAse domain (RuvB-S). Residues 265–356 (PVGFDLMDRK…RDEWDTPDGK (92 aa)) are head domain (RuvB-H). DNA is bound by residues R301, R320, and R325.

This sequence belongs to the RuvB family. Homohexamer. Forms an RuvA(8)-RuvB(12)-Holliday junction (HJ) complex. HJ DNA is sandwiched between 2 RuvA tetramers; dsDNA enters through RuvA and exits via RuvB. An RuvB hexamer assembles on each DNA strand where it exits the tetramer. Each RuvB hexamer is contacted by two RuvA subunits (via domain III) on 2 adjacent RuvB subunits; this complex drives branch migration. In the full resolvosome a probable DNA-RuvA(4)-RuvB(12)-RuvC(2) complex forms which resolves the HJ.

The protein localises to the cytoplasm. The catalysed reaction is ATP + H2O = ADP + phosphate + H(+). Functionally, the RuvA-RuvB-RuvC complex processes Holliday junction (HJ) DNA during genetic recombination and DNA repair, while the RuvA-RuvB complex plays an important role in the rescue of blocked DNA replication forks via replication fork reversal (RFR). RuvA specifically binds to HJ cruciform DNA, conferring on it an open structure. The RuvB hexamer acts as an ATP-dependent pump, pulling dsDNA into and through the RuvAB complex. RuvB forms 2 homohexamers on either side of HJ DNA bound by 1 or 2 RuvA tetramers; 4 subunits per hexamer contact DNA at a time. Coordinated motions by a converter formed by DNA-disengaged RuvB subunits stimulates ATP hydrolysis and nucleotide exchange. Immobilization of the converter enables RuvB to convert the ATP-contained energy into a lever motion, pulling 2 nucleotides of DNA out of the RuvA tetramer per ATP hydrolyzed, thus driving DNA branch migration. The RuvB motors rotate together with the DNA substrate, which together with the progressing nucleotide cycle form the mechanistic basis for DNA recombination by continuous HJ branch migration. Branch migration allows RuvC to scan DNA until it finds its consensus sequence, where it cleaves and resolves cruciform DNA. The chain is Holliday junction branch migration complex subunit RuvB from Burkholderia cenocepacia (strain HI2424).